We begin with the raw amino-acid sequence, 182 residues long: MDIILATSSPRRINLLKMLNIKFKTVAPRIKENINETDPEKLVKKLSKLKALSIKEKGIIISADTIVYHNNKVLGKPKNLDNAFNMLKELSSKWHTVYTGVTIIEKDDIITFCEKTMVKFKKLSDELIRYYISTSKPLDKAGAYGIQELGAILVEKIEGDYYNVVGLPISRIWDILWDRRII.

The active-site Proton acceptor is the Asp64.

Belongs to the Maf family. YhdE subfamily. Requires a divalent metal cation as cofactor.

The protein resides in the cytoplasm. The catalysed reaction is dTTP + H2O = dTMP + diphosphate + H(+). It catalyses the reaction UTP + H2O = UMP + diphosphate + H(+). Nucleoside triphosphate pyrophosphatase that hydrolyzes dTTP and UTP. May have a dual role in cell division arrest and in preventing the incorporation of modified nucleotides into cellular nucleic acids. This chain is dTTP/UTP pyrophosphatase, found in Thermosipho melanesiensis (strain DSM 12029 / CIP 104789 / BI429).